The following is a 357-amino-acid chain: Hydroxyproline O-arabinosyltransferase RDN1 (357 aa).

Residues 13–33 (LLMLLMVLGFSFATYNLVFMM) traverse the membrane as a helical; Signal-anchor segment.

In terms of tissue distribution, expressed in the vasculature of leaves, petioles, stems and roots. Expressed in the vascular cylinder throughout the root, and nodule vasculature.

The protein resides in the golgi apparatus membrane. The enzyme catalyses trans-4-hydroxy-L-prolyl-[protein] + UDP-beta-L-arabinofuranose = O-(beta-L-arabinofuranosyl)-trans-4-hydroxy-L-prolyl-[protein] + UDP + H(+). Its function is as follows. Probable glycosyltransferase involved in the O-arabinosylation of several proteins including extensins and small signaling peptides. Catalyzes the transfer of the initial L-arabinose to the hydroxyl group of Hyp residues. Probably involved in the arabinosylation of CLE12, a signaling peptide that moves from root to shoot, to interact with SUNN receptor kinase signaling that regulates nodulation. Involved in long distance nodulation signaling events. Involved in the autoregulation of nodulation (AON), a long distance systemic signaling from root to shoot and back again, which allows legumes to limit the number of root nodules formed based on available nitrogen and previous rhizobial colonization. Functions in the root, upstream of the shoot receptor kinase SUNN and via CLE peptide, to control AON. This chain is Hydroxyproline O-arabinosyltransferase RDN1, found in Medicago truncatula (Barrel medic).